Here is a 350-residue protein sequence, read N- to C-terminus: Glycerol-1-phosphate dehydrogenase [NAD(P)+] (350 aa).

Residues G97–D101 and T119–S122 each bind NAD(+). D124 serves as a coordination point for substrate. S128 is a binding site for NAD(+). Residue D171 participates in substrate binding. 2 residues coordinate Zn(2+): D171 and H251. Position 255 (H255) interacts with substrate. H267 serves as a coordination point for Zn(2+).

Belongs to the glycerol-1-phosphate dehydrogenase family. Zn(2+) serves as cofactor.

The protein localises to the cytoplasm. The catalysed reaction is sn-glycerol 1-phosphate + NAD(+) = dihydroxyacetone phosphate + NADH + H(+). The enzyme catalyses sn-glycerol 1-phosphate + NADP(+) = dihydroxyacetone phosphate + NADPH + H(+). The protein operates within membrane lipid metabolism; glycerophospholipid metabolism. In terms of biological role, catalyzes the NAD(P)H-dependent reduction of dihydroxyacetonephosphate (DHAP or glycerone phosphate) to glycerol 1-phosphate (G1P). The G1P thus generated is used as the glycerophosphate backbone of phospholipids in the cellular membranes of Archaea. This chain is Glycerol-1-phosphate dehydrogenase [NAD(P)+], found in Picrophilus torridus (strain ATCC 700027 / DSM 9790 / JCM 10055 / NBRC 100828 / KAW 2/3).